The following is a 373-amino-acid chain: Sterol-4-alpha-carboxylate 3-dehydrogenase, decarboxylating (373 aa).

An N-acetylmethionine modification is found at M1. T22 is modified (phosphothreonine). Y172 (proton acceptor) is an active-site residue. Position 176 (K176) interacts with NAD(+). A helical membrane pass occupies residues 298-318; the sequence is WVAYYLALLLSLLVMVISPVI. The Prevents secretion from ER signature appears at 370 to 373; the sequence is RRVK.

The protein belongs to the 3-beta-HSD family. Homodimer. Brain, heart, liver, lung, kidney, skin and placenta.

Its subcellular location is the endoplasmic reticulum membrane. It is found in the lipid droplet. The enzyme catalyses a 3beta-hydroxysteroid-4alpha-carboxylate + NADP(+) = a 3-oxosteroid + CO2 + NADPH. It carries out the reaction a 3beta-hydroxysteroid-4alpha-carboxylate + NAD(+) = a 3-oxosteroid + CO2 + NADH. It catalyses the reaction 4alpha-carboxyzymosterol + NADP(+) = zymosterone + CO2 + NADPH. The catalysed reaction is 4alpha-carboxy-4beta-methyl-5alpha-cholest-8-en-3beta-ol + NADP(+) = 4alpha-methyl-5alpha-cholest-8-en-3-one + CO2 + NADPH. The enzyme catalyses 4alpha-carboxy-5alpha-cholest-8-ene-3beta-ol + NADP(+) = 5alpha-cholest-8-en-3-one + CO2 + NADPH. It carries out the reaction 4beta-methylzymosterol-4alpha-carboxylate + NADP(+) = 3-dehydro-4-methylzymosterol + CO2 + NADPH. It catalyses the reaction 4beta-methylzymosterol-4alpha-carboxylate + NAD(+) = 3-dehydro-4-methylzymosterol + CO2 + NADH. The catalysed reaction is 4alpha-carboxy-5alpha-cholest-8-ene-3beta-ol + NAD(+) = 5alpha-cholest-8-en-3-one + CO2 + NADH. The enzyme catalyses 4alpha-carboxy-4beta-methyl-5alpha-cholest-8-en-3beta-ol + NAD(+) = 4alpha-methyl-5alpha-cholest-8-en-3-one + CO2 + NADH. It carries out the reaction 4alpha-carboxyzymosterol + NAD(+) = zymosterone + CO2 + NADH. Its pathway is steroid biosynthesis; zymosterol biosynthesis; zymosterol from lanosterol: step 4/6. Catalyzes the NAD(P)(+)-dependent oxidative decarboxylation of the C4 methyl groups of 4-alpha-carboxysterols in post-squalene cholesterol biosynthesis. Also plays a role in the regulation of the endocytic trafficking of EGFR. The protein is Sterol-4-alpha-carboxylate 3-dehydrogenase, decarboxylating (NSDHL) of Homo sapiens (Human).